The primary structure comprises 339 residues: Ketol-acid reductoisomerase (NADP(+)) (339 aa).

Residues 1 to 182 (MRVYYDRDAD…GGGRAGVIET (182 aa)) form the KARI N-terminal Rossmann domain. NADP(+)-binding positions include 24-27 (YGSQ), R48, S51, T53, and 83-86 (DELQ). The active site involves H108. Residue G134 coordinates NADP(+). Residues 183–328 (TFKEECETDL…KKLRSMMPWI (146 aa)) form the KARI C-terminal knotted domain. Mg(2+)-binding residues include D191, E195, E227, and E231. S252 contributes to the substrate binding site.

This sequence belongs to the ketol-acid reductoisomerase family. Requires Mg(2+) as cofactor.

It catalyses the reaction (2R)-2,3-dihydroxy-3-methylbutanoate + NADP(+) = (2S)-2-acetolactate + NADPH + H(+). The enzyme catalyses (2R,3R)-2,3-dihydroxy-3-methylpentanoate + NADP(+) = (S)-2-ethyl-2-hydroxy-3-oxobutanoate + NADPH + H(+). The protein operates within amino-acid biosynthesis; L-isoleucine biosynthesis; L-isoleucine from 2-oxobutanoate: step 2/4. Its pathway is amino-acid biosynthesis; L-valine biosynthesis; L-valine from pyruvate: step 2/4. Its function is as follows. Involved in the biosynthesis of branched-chain amino acids (BCAA). Catalyzes an alkyl-migration followed by a ketol-acid reduction of (S)-2-acetolactate (S2AL) to yield (R)-2,3-dihydroxy-isovalerate. In the isomerase reaction, S2AL is rearranged via a Mg-dependent methyl migration to produce 3-hydroxy-3-methyl-2-ketobutyrate (HMKB). In the reductase reaction, this 2-ketoacid undergoes a metal-dependent reduction by NADPH to yield (R)-2,3-dihydroxy-isovalerate. This chain is Ketol-acid reductoisomerase (NADP(+)), found in Bartonella tribocorum (strain CIP 105476 / IBS 506).